Here is a 316-residue protein sequence, read N- to C-terminus: L-lactate dehydrogenase (316 aa).

NAD(+)-binding positions include Val-16, Asp-37, Lys-42, Tyr-68, and 82–83 (GA). Gln-85 and Arg-91 together coordinate substrate. NAD(+) contacts are provided by residues Ser-104, 121-123 (AAN), and Ser-146. 123-126 (NPVD) contacts substrate. Residue 151–154 (DSAR) participates in substrate binding. Arg-156 and His-171 together coordinate beta-D-fructose 1,6-bisphosphate. The Proton acceptor role is filled by His-178. Residue Tyr-222 is modified to Phosphotyrosine. Position 231 (Thr-231) interacts with substrate.

This sequence belongs to the LDH/MDH superfamily. LDH family. As to quaternary structure, homotetramer.

The protein resides in the cytoplasm. It catalyses the reaction (S)-lactate + NAD(+) = pyruvate + NADH + H(+). It functions in the pathway fermentation; pyruvate fermentation to lactate; (S)-lactate from pyruvate: step 1/1. Its activity is regulated as follows. Allosterically activated by fructose 1,6-bisphosphate (FBP). Its function is as follows. Catalyzes the conversion of lactate to pyruvate. This is L-lactate dehydrogenase from Staphylococcus epidermidis (strain ATCC 12228 / FDA PCI 1200).